We begin with the raw amino-acid sequence, 483 residues long: UDP-N-acetylmuramoyl-L-alanyl-D-glutamate--2,6-diaminopimelate ligase (483 aa).

Serine 30 lines the UDP-N-acetyl-alpha-D-muramoyl-L-alanyl-D-glutamate pocket. Glycine 109 to threonine 115 is an ATP binding site. Residues threonine 151–threonine 152, serine 178, and arginine 186 contribute to the UDP-N-acetyl-alpha-D-muramoyl-L-alanyl-D-glutamate site. Lysine 218 is subject to N6-carboxylysine. Residues arginine 380, aspartate 403 to arginine 406, glycine 453, and glutamate 457 contribute to the meso-2,6-diaminopimelate site. The Meso-diaminopimelate recognition motif motif lies at aspartate 403–arginine 406.

It belongs to the MurCDEF family. MurE subfamily. It depends on Mg(2+) as a cofactor. Post-translationally, carboxylation is probably crucial for Mg(2+) binding and, consequently, for the gamma-phosphate positioning of ATP.

The protein resides in the cytoplasm. The enzyme catalyses UDP-N-acetyl-alpha-D-muramoyl-L-alanyl-D-glutamate + meso-2,6-diaminopimelate + ATP = UDP-N-acetyl-alpha-D-muramoyl-L-alanyl-gamma-D-glutamyl-meso-2,6-diaminopimelate + ADP + phosphate + H(+). The protein operates within cell wall biogenesis; peptidoglycan biosynthesis. Catalyzes the addition of meso-diaminopimelic acid to the nucleotide precursor UDP-N-acetylmuramoyl-L-alanyl-D-glutamate (UMAG) in the biosynthesis of bacterial cell-wall peptidoglycan. The protein is UDP-N-acetylmuramoyl-L-alanyl-D-glutamate--2,6-diaminopimelate ligase of Chlamydia caviae (strain ATCC VR-813 / DSM 19441 / 03DC25 / GPIC) (Chlamydophila caviae).